Here is a 680-residue protein sequence, read N- to C-terminus: MADPHERAAELRHLLNRAGHAYYVLDAPEMEDTVYDRLYRELLELEQNDPGLQRPDSPTQRVGGAPAEGFTSVEHRVGMLSLDNAFNRDDLRAWHERLLKVLDRPSDSRLPLVGELKIDGNALALSYRNGVLERAATRGDGSRGEEITANVRTISSIPLRLQIENPPEWVEVRGEAFIPDATFAAINAEREQRDEALFANPRNACAGTLRQLDPKVVAARRLDFFAYTLHLPGDAQPPGQWAALEWLNSAGFRVNPNRELCGDLAAIQRFCDHWEQGRHDLPYATDGVVVKLDDLQLQDEAGFTQKAPRWAVALKYPAEEAPTRLLRVGAQVGRTGAITPVAEFEAVPLAGTSVSRATLHNADRIAELDLHLGDTIVVRKAGEIIPEVVRVLPELRPSDATPVQLPQQCPECGSNLVREGDEAATRCVNSSCPAILRGGLRHWVSKGALDVDGLGSKLIEQLVDRGLVGSLADLYRLDAALLASLDRMGDKSATNLVEALKASKQQPWHRQLYGLGIRHIGEVNAKALAAAFFSIDSLATAALEAPEQIAELHGIGPEISASLGQWLHTPANQQLLQDLRSVGFSLEASTSEQEAASQAGADADGVLQGKTLVLTGTLPNLSRSEAKALIETAGGKVSGSVSKKTDYLVAGEAAGSKLTKAESLGVTVLSEADLTALLQP.

Residue 32-36 (DTVYD) participates in NAD(+) binding. A disordered region spans residues 47–66 (QNDPGLQRPDSPTQRVGGAP). Residues 81-82 (SL) and Glu115 contribute to the NAD(+) site. The active-site N6-AMP-lysine intermediate is Lys117. Residues Arg138, Glu175, Lys291, and Lys315 each coordinate NAD(+). Zn(2+)-binding residues include Cys409, Cys412, Cys427, and Cys432. The region spanning 602–680 (DADGVLQGKT…EADLTALLQP (79 aa)) is the BRCT domain.

It belongs to the NAD-dependent DNA ligase family. LigA subfamily. Mg(2+) serves as cofactor. Requires Mn(2+) as cofactor.

It catalyses the reaction NAD(+) + (deoxyribonucleotide)n-3'-hydroxyl + 5'-phospho-(deoxyribonucleotide)m = (deoxyribonucleotide)n+m + AMP + beta-nicotinamide D-nucleotide.. In terms of biological role, DNA ligase that catalyzes the formation of phosphodiester linkages between 5'-phosphoryl and 3'-hydroxyl groups in double-stranded DNA using NAD as a coenzyme and as the energy source for the reaction. It is essential for DNA replication and repair of damaged DNA. This Synechococcus sp. (strain CC9605) protein is DNA ligase.